Reading from the N-terminus, the 547-residue chain is Elongator complex protein 3 (547 aa).

Positions 82–372 (RTASGIAVVA…YRVQRDIPMP (291 aa)) constitute a Radical SAM core domain. Residues Cys-99, Cys-109, and Cys-112 each contribute to the [4Fe-4S] cluster site. Ser-161 bears the Phosphoserine mark. Lys-164 contacts acetyl-CoA. Phosphotyrosine; by ALK is present on Tyr-202. At Lys-229 the chain carries N6-methyllysine. Residue Tyr-251 is modified to Phosphotyrosine. The region spanning 396–547 (IQCRDVRTRE…QGPYMVKMLK (152 aa)) is the N-acetyltransferase domain. Acetyl-CoA is bound by residues 474–477 (ELHV), 497–499 (FGM), and Tyr-530.

Belongs to the ELP3 family. In terms of assembly, component of the elongator complex which consists of ELP1, ELP2, ELP3, ELP4, ELP5 and ELP6. ELP1, ELP2 and ELP3 form the elongator core complex. Interacts with alpha-tubulin. [4Fe-4S] cluster is required as a cofactor. Post-translationally, tyrosine-phosphorylated; phosphorylation on Tyr-202 does not affect elongator complex integrity or ELP3 protein stability. Also serine/threonine-phosphorylated. As to expression, expressed in the cerebellum and spinal motor neurons.

The protein resides in the cytoplasm. It localises to the nucleus. The catalysed reaction is uridine(34) in tRNA + acetyl-CoA + S-adenosyl-L-methionine + H2O = 5-(carboxymethyl)uridine(34) in tRNA + 5'-deoxyadenosine + L-methionine + CoA + 2 H(+). It participates in tRNA modification; 5-methoxycarbonylmethyl-2-thiouridine-tRNA biosynthesis. Catalytic tRNA acetyltransferase subunit of the elongator complex which is required for multiple tRNA modifications, including mcm5U (5-methoxycarbonylmethyl uridine), mcm5s2U (5-methoxycarbonylmethyl-2-thiouridine), and ncm5U (5-carbamoylmethyl uridine). In the elongator complex, acts as a tRNA uridine(34) acetyltransferase by mediating formation of carboxymethyluridine in the wobble base at position 34 in tRNAs. May also act as a protein lysine acetyltransferase by mediating acetylation of target proteins; such activity is however unclear in vivo and recent evidences suggest that ELP3 primarily acts as a tRNA acetyltransferase. Involved in neurogenesis: regulates the migration and branching of projection neurons in the developing cerebral cortex, through a process depending on alpha-tubulin acetylation. Required for acetylation of GJA1 in the developing cerebral cortex. The chain is Elongator complex protein 3 from Homo sapiens (Human).